The sequence spans 2491 residues: Cation-independent mannose-6-phosphate receptor (2491 aa).

Positions 1–40 are cleaved as a signal peptide; that stretch reads MGAAAGRSPHLGPAPARRPQRSLLLLQLLLLVAAPGSTQA. The Lumenal segment spans residues 41 to 2304; sequence QAAPFPELCS…MHKGLSERSQ (2264 aa). MRH domains are found at residues 47–163, 172–320, 326–468, 473–619, 625–762, 765–924, 932–1079, 1082–1219, 1225–1363, 1367–1508, 1514–1648, and 1650–1797; these read ELCS…ACKK, VPCY…ACHR, KTCS…ACVK, LLCG…ACVL, ENCT…ACPE, LECV…ACPI, QACS…ACVP, VDCQ…ACPV, DNCE…ACPP, TECS…ACPM, DDCQ…ACEQ, and TECS…VCPD. Intrachain disulfides connect Cys49–Cys69 and Cys77–Cys84. Residue Asn112 is glycosylated (N-linked (GlcNAc...) asparagine). 8 disulfides stabilise this stretch: Cys117–Cys149, Cys134–Cys161, Cys174–Cys212, Cys228–Cys235, Cys275–Cys306, Cys288–Cys318, Cys328–Cys366, and Cys374–Cys382. Residues Asn400 and Asn435 are each glycosylated (N-linked (GlcNAc...) asparagine). 4 disulfide bridges follow: Cys420–Cys454, Cys434–Cys466, Cys475–Cys519, and Cys531–Cys538. Residues Asn543 and Asn581 are each glycosylated (N-linked (GlcNAc...) asparagine). Intrachain disulfides connect Cys572–Cys605 and Cys586–Cys617. A glycan (N-linked (GlcNAc...) asparagine) is linked at Asn626. Cystine bridges form between Cys627–Cys664, Cys672–Cys679, Cys731–Cys760, Cys767–Cys814, and Cys823–Cys830. An N-linked (GlcNAc...) asparagine glycan is attached at Asn747. An N-linked (GlcNAc...) asparagine glycan is attached at Asn871. 7 disulfides stabilise this stretch: Cys875–Cys910, Cys893–Cys922, Cys934–Cys970, Cys976–Cys987, Cys1042–Cys1077, Cys1084–Cys1125, and Cys1134–Cys1142. Asn951 and Asn957 each carry an N-linked (GlcNAc...) asparagine glycan. The N-linked (GlcNAc...) asparagine glycan is linked to Asn1164. 4 cysteine pairs are disulfide-bonded: Cys1177–Cys1205, Cys1190–Cys1217, Cys1227–Cys1262, and Cys1270–Cys1282. The N-linked (GlcNAc...) asparagine glycan is linked to Asn1246. An N-linked (GlcNAc...) asparagine glycan is attached at Asn1312. 24 disulfide bridges follow: Cys1319/Cys1349, Cys1333/Cys1361, Cys1369/Cys1408, Cys1420/Cys1427, Cys1461/Cys1494, Cys1476/Cys1506, Cys1516/Cys1553, Cys1559/Cys1566, Cys1598/Cys1634, Cys1614/Cys1646, Cys1652/Cys1695, Cys1706/Cys1713, Cys1750/Cys1783, Cys1766/Cys1795, Cys1804/Cys1839, Cys1850/Cys1856, Cys1893/Cys1975, Cys1903/Cys1927, Cys1917/Cys1942, Cys1957/Cys1987, Cys1994/Cys2029, Cys2039/Cys2046, Cys2082/Cys2113, and Cys2096/Cys2125. A glycan (N-linked (GlcNAc...) asparagine) is linked at Asn1656. An N-linked (GlcNAc...) asparagine glycan is attached at Asn1757. One can recognise a Fibronectin type-II domain in the interval 1802–1989; that stretch reads DGCTLTDEQL…EWKTKVVCPP (188 aa). The N-linked (GlcNAc...) asparagine glycan is linked to Asn1816. MRH domains lie at 1992-2127 and 2135-2280; these read LECK…ACAV and VNGT…VCPL. Asn2085 carries N-linked (GlcNAc...) asparagine glycosylation. Asn2136 carries an N-linked (GlcNAc...) asparagine glycan. Cystine bridges form between Cys2188–Cys2194, Cys2232–Cys2266, and Cys2248–Cys2278. A helical membrane pass occupies residues 2305–2327; that stretch reads AVGAVLSLLLVALTCCLLALLLY. Residues 2328 to 2491 are Cytoplasmic-facing; sequence KKERRETVIS…DDSDEDLLHI (164 aa). Lys2352 is subject to N6-acetyllysine. Residue Ser2409 is modified to Phosphoserine. Residues 2424 to 2491 form a disordered region; that stretch reads GRGAGAESSH…DDSDEDLLHI (68 aa). Arg2425 is subject to Omega-N-methylarginine. The segment covering 2444–2459 has biased composition (basic and acidic residues); the sequence is QEREDDRVGLVRGEKA. Residues 2464–2477 show a composition bias toward polar residues; it reads SSSAQQKTVSSTKL. Phosphoserine is present on residues Ser2479 and Ser2484. Positions 2479–2491 are enriched in basic and acidic residues; it reads SFHDDSDEDLLHI.

This sequence belongs to the MRL1/IGF2R family. Binds HA-I and HA-II plasma membrane adapters. Interacts with DPP4; the interaction is direct. Binds GGA1, GGA2 and GGA3. Interacts with the heterotrimeric retromer cargo-selective complex (CSC), formed by VPS26 (VPS26A or VPS26B), VPS29 and VPS35; which is involved in retrograde trafficking of the receptor from endosomes to the Golgi apparatus. In terms of processing, palmitoylated. Undergoes cysteine S-palmitoylation which promotes interaction with the retromer cargo-selective complex which mediates its retrograde trafficking to the Golgi apparatus.

The protein localises to the golgi apparatus membrane. It localises to the endosome membrane. In terms of biological role, mediates the transport of phosphorylated lysosomal enzymes from the Golgi complex and the cell surface to lysosomes. Lysosomal enzymes bearing phosphomannosyl residues bind specifically to mannose-6-phosphate receptors in the Golgi apparatus and the resulting receptor-ligand complex is transported to an acidic prelysosomal compartment where the low pH mediates the dissociation of the complex. The receptor is then recycled back to the Golgi for another round of trafficking through its binding to the retromer. This receptor also binds IGF2. Acts as a positive regulator of T-cell coactivation by binding DPP4. The chain is Cation-independent mannose-6-phosphate receptor (IGF2R) from Homo sapiens (Human).